The chain runs to 111 residues: Nucleoid-associated protein CT0805 (111 aa).

It belongs to the YbaB/EbfC family. In terms of assembly, homodimer.

Its subcellular location is the cytoplasm. The protein localises to the nucleoid. In terms of biological role, binds to DNA and alters its conformation. May be involved in regulation of gene expression, nucleoid organization and DNA protection. In Chlorobaculum tepidum (strain ATCC 49652 / DSM 12025 / NBRC 103806 / TLS) (Chlorobium tepidum), this protein is Nucleoid-associated protein CT0805.